Consider the following 460-residue polypeptide: Argininosuccinate lyase (460 aa).

Belongs to the lyase 1 family. Argininosuccinate lyase subfamily.

Its subcellular location is the cytoplasm. It carries out the reaction 2-(N(omega)-L-arginino)succinate = fumarate + L-arginine. Its pathway is amino-acid biosynthesis; L-arginine biosynthesis; L-arginine from L-ornithine and carbamoyl phosphate: step 3/3. The sequence is that of Argininosuccinate lyase from Oleidesulfovibrio alaskensis (strain ATCC BAA-1058 / DSM 17464 / G20) (Desulfovibrio alaskensis).